The following is a 1031-amino-acid chain: Formin-binding protein 4 (1031 aa).

3 disordered regions span residues 1–102 (MMGK…TTRP), 116–143 (AYADSDDDESDVSEKTAQSKEANGNQAT), and 166–205 (APVVASAPPPTPPRPEPKEAATPALSPTASNGSDTAQTPG). The residue at position 19 (Ser-19) is a Phosphoserine. 2 stretches are compositionally biased toward low complexity: residues 41-73 (DSTAAATSQSAPAAATAAAATSPAVPASAAPED) and 83-92 (VVEVPNVVQN). 3 positions are modified to phosphoserine: Ser-120, Ser-125, and Ser-128. Over residues 134 to 143 (SKEANGNQAT) the composition is skewed to polar residues. Thr-176 carries the phosphothreonine modification. A compositionally biased stretch (polar residues) spans 190–203 (LSPTASNGSDTAQT). Residues 218–252 (EIEMGDWQEVWDENTGCYYYWNTQTNEVTWELPQY) form the WW 1 domain. At Lys-294 the chain carries N6-acetyllysine. Lys-305 is covalently cross-linked (Glycyl lysine isopeptide (Lys-Gly) (interchain with G-Cter in SUMO1)). Lys-339 is covalently cross-linked (Glycyl lysine isopeptide (Lys-Gly) (interchain with G-Cter in SUMO2)). Lys-352 is covalently cross-linked (Glycyl lysine isopeptide (Lys-Gly) (interchain with G-Cter in SUMO1); alternate). A Glycyl lysine isopeptide (Lys-Gly) (interchain with G-Cter in SUMO2); alternate cross-link involves residue Lys-352. Residues 355–518 (DPVSETKETS…KETEVEESSE (164 aa)) are disordered. Residues 400 to 414 (ESEEEEEEEEQDTLE) are compositionally biased toward acidic residues. The segment covering 418-430 (ALERKKAELRALE) has biased composition (basic and acidic residues). Residues Ser-435, Ser-440, Ser-443, Ser-446, and Ser-450 each carry the phosphoserine modification. Over residues 436–450 (VSGSSPRSDISQPAS) the composition is skewed to polar residues. Residues 457 to 466 (IMSKRGKWKM) are compositionally biased toward basic residues. The span at 469–482 (RATSPESTSRSSSK) shows a compositional bias: low complexity. Ser-472, Ser-507, and Ser-516 each carry phosphoserine. Basic and acidic residues predominate over residues 499 to 518 (DSEKIDEISDKETEVEESSE). A Glycyl lysine isopeptide (Lys-Gly) (interchain with G-Cter in SUMO1); alternate cross-link involves residue Lys-527. Residue Lys-527 forms a Glycyl lysine isopeptide (Lys-Gly) (interchain with G-Cter in SUMO2); alternate linkage. The 35-residue stretch at 603–637 (NATPKGWSCHWDRDHRRYFYVNEQSGESQWEFPDG) folds into the WW 2 domain. Disordered stretches follow at residues 629 to 681 (ESQW…SLCK), 712 to 813 (PLPL…VQRS), and 900 to 994 (PAQA…RIEE). Positions 643 to 663 (SQTKEVRDESLPKLTVKDKTC) are enriched in basic and acidic residues. Residues 664–677 (TDPNSTESSENPTG) are compositionally biased toward polar residues. Over residues 712–741 (PLPLEMPPPPPPPPESPPPPPPPPPPPPPL) the composition is skewed to pro residues. The segment covering 742-757 (EDGEIQEVEMEDEGSE) has biased composition (acidic residues). The span at 771–794 (KPSTQTTAVTSQSLVDSTASSPPS) shows a compositional bias: polar residues. Pro residues predominate over residues 913–939 (VEPPPPPPPPPTPTPPPPPPAPKVPPP). A compositionally biased stretch (basic residues) spans 943-955 (RKGKKDKAKKSKT). Residues 971-984 (LDEEDNSSSSEEDR) are compositionally biased toward acidic residues. Ser-977, Ser-978, and Ser-979 each carry phosphoserine. A compositionally biased stretch (basic and acidic residues) spans 985-994 (ESTAQKRIEE).

Binds FMN1. Interacts with the Arg/Gly-rich-flanked Pro-rich regions of KHDRBS1/SAM68. Arginine methylation in these regions has no effect on this binding. In terms of tissue distribution, ubiquitous. Highest levels in spleen and thymus.

The polypeptide is Formin-binding protein 4 (Fnbp4) (Mus musculus (Mouse)).